A 339-amino-acid polypeptide reads, in one-letter code: Ketol-acid reductoisomerase (NADP(+)) (339 aa).

The region spanning 1–182 (MRVYYDRDAD…GGGRAGIIET (182 aa)) is the KARI N-terminal Rossmann domain. NADP(+) contacts are provided by residues 24-27 (YGSQ), Arg-48, Ser-51, Thr-53, and 83-86 (DELQ). The active site involves His-108. Gly-134 contacts NADP(+). The KARI C-terminal knotted domain occupies 183–328 (TFREECETDL…AKLRAMMPWI (146 aa)). Mg(2+)-binding residues include Asp-191, Glu-195, Glu-227, and Glu-231. Ser-252 contributes to the substrate binding site.

This sequence belongs to the ketol-acid reductoisomerase family. Mg(2+) serves as cofactor.

The catalysed reaction is (2R)-2,3-dihydroxy-3-methylbutanoate + NADP(+) = (2S)-2-acetolactate + NADPH + H(+). It carries out the reaction (2R,3R)-2,3-dihydroxy-3-methylpentanoate + NADP(+) = (S)-2-ethyl-2-hydroxy-3-oxobutanoate + NADPH + H(+). The protein operates within amino-acid biosynthesis; L-isoleucine biosynthesis; L-isoleucine from 2-oxobutanoate: step 2/4. It functions in the pathway amino-acid biosynthesis; L-valine biosynthesis; L-valine from pyruvate: step 2/4. Functionally, involved in the biosynthesis of branched-chain amino acids (BCAA). Catalyzes an alkyl-migration followed by a ketol-acid reduction of (S)-2-acetolactate (S2AL) to yield (R)-2,3-dihydroxy-isovalerate. In the isomerase reaction, S2AL is rearranged via a Mg-dependent methyl migration to produce 3-hydroxy-3-methyl-2-ketobutyrate (HMKB). In the reductase reaction, this 2-ketoacid undergoes a metal-dependent reduction by NADPH to yield (R)-2,3-dihydroxy-isovalerate. The sequence is that of Ketol-acid reductoisomerase (NADP(+)) from Methylocella silvestris (strain DSM 15510 / CIP 108128 / LMG 27833 / NCIMB 13906 / BL2).